The primary structure comprises 515 residues: 2-isopropylmalate synthase (515 aa).

Residues 5–267 (VIIFDTTLRD…STGIKHEEIH (263 aa)) enclose the Pyruvate carboxyltransferase domain. Residues Asp14, His202, His204, and Asn238 each coordinate Mn(2+). A regulatory domain region spans residues 392-515 (KLNYLSVQSG…EMKQKKIATV (124 aa)).

This sequence belongs to the alpha-IPM synthase/homocitrate synthase family. LeuA type 1 subfamily. As to quaternary structure, homodimer. The cofactor is Mn(2+).

It is found in the cytoplasm. The catalysed reaction is 3-methyl-2-oxobutanoate + acetyl-CoA + H2O = (2S)-2-isopropylmalate + CoA + H(+). It functions in the pathway amino-acid biosynthesis; L-leucine biosynthesis; L-leucine from 3-methyl-2-oxobutanoate: step 1/4. Functionally, catalyzes the condensation of the acetyl group of acetyl-CoA with 3-methyl-2-oxobutanoate (2-ketoisovalerate) to form 3-carboxy-3-hydroxy-4-methylpentanoate (2-isopropylmalate). This is 2-isopropylmalate synthase from Vibrio parahaemolyticus serotype O3:K6 (strain RIMD 2210633).